We begin with the raw amino-acid sequence, 139 residues long: Small ribosomal subunit protein uS11A (139 aa).

A disordered region spans residues 119-139; the sequence is DVTPIPTDSTRRKGGRRGRRL. The segment covering 130–139 has biased composition (basic residues); that stretch reads RKGGRRGRRL.

The protein belongs to the universal ribosomal protein uS11 family. In terms of assembly, component of the small ribosomal subunit (SSU). Mature yeast ribosomes consist of a small (40S) and a large (60S) subunit. The 40S small subunit contains 1 molecule of ribosomal RNA (18S rRNA) and at least 33 different proteins. The large 60S subunit contains 3 rRNA molecules (25S, 5.8S and 5S rRNA) and at least 46 different proteins. uS11 interacts with eS1 forming part of the mRNA exit tunnel. uS11 interacts with snoRNA U3. uS11 interacts with MPP10. Component of the ribosomal small subunit (SSU) processome composed of at least 40 protein subunits and snoRNA U3.

The protein resides in the cytoplasm. The protein localises to the nucleus. Its subcellular location is the nucleolus. Its function is as follows. Component of the ribosome, a large ribonucleoprotein complex responsible for the synthesis of proteins in the cell. The small ribosomal subunit (SSU) binds messenger RNAs (mRNAs) and translates the encoded message by selecting cognate aminoacyl-transfer RNA (tRNA) molecules. The large subunit (LSU) contains the ribosomal catalytic site termed the peptidyl transferase center (PTC), which catalyzes the formation of peptide bonds, thereby polymerizing the amino acids delivered by tRNAs into a polypeptide chain. The nascent polypeptides leave the ribosome through a tunnel in the LSU and interact with protein factors that function in enzymatic processing, targeting, and the membrane insertion of nascent chains at the exit of the ribosomal tunnel. uS11 is involved in nucleolar processing of pre-18S ribosomal RNA and ribosome assembly. The sequence is that of Small ribosomal subunit protein uS11A (rps1401) from Schizosaccharomyces pombe (strain 972 / ATCC 24843) (Fission yeast).